The following is a 128-amino-acid chain: Cytochrome c-type biogenesis protein CcmE (128 aa).

Residues 1 to 8 are Cytoplasmic-facing; it reads MQKRVRNR. A helical; Signal-anchor for type II membrane protein transmembrane segment spans residues 9–29; the sequence is LITIIICFCSAFLGISIILYN. Topologically, residues 30-128 are periplasmic; the sequence is LEKNIVFFLP…KHDENYRPPQ (99 aa). Positions 120 and 124 each coordinate heme.

It belongs to the CcmE/CycJ family.

It localises to the cell inner membrane. In terms of biological role, heme chaperone required for the biogenesis of c-type cytochromes. Transiently binds heme delivered by CcmC and transfers the heme to apo-cytochromes in a process facilitated by CcmF and CcmH. This is Cytochrome c-type biogenesis protein CcmE from Rickettsia rickettsii (strain Iowa).